The sequence spans 183 residues: Protein Syd (183 aa).

It belongs to the Syd family.

The protein resides in the cell inner membrane. Functionally, interacts with the SecY protein in vivo. May bind preferentially to an uncomplexed state of SecY, thus functioning either as a chelating agent for excess SecY in the cell or as a regulatory factor that negatively controls the translocase function. The polypeptide is Protein Syd (Yersinia enterocolitica serotype O:8 / biotype 1B (strain NCTC 13174 / 8081)).